The chain runs to 398 residues: Phosphopentomutase (398 aa).

Mn(2+) contacts are provided by Asp13, Asp290, His295, Asp331, His332, and His343.

The protein belongs to the phosphopentomutase family. The cofactor is Mn(2+).

It is found in the cytoplasm. The catalysed reaction is 2-deoxy-alpha-D-ribose 1-phosphate = 2-deoxy-D-ribose 5-phosphate. It carries out the reaction alpha-D-ribose 1-phosphate = D-ribose 5-phosphate. It participates in carbohydrate degradation; 2-deoxy-D-ribose 1-phosphate degradation; D-glyceraldehyde 3-phosphate and acetaldehyde from 2-deoxy-alpha-D-ribose 1-phosphate: step 1/2. Isomerase that catalyzes the conversion of deoxy-ribose 1-phosphate (dRib-1-P) and ribose 1-phosphate (Rib-1-P) to deoxy-ribose 5-phosphate (dRib-5-P) and ribose 5-phosphate (Rib-5-P), respectively. In Clostridium tetani (strain Massachusetts / E88), this protein is Phosphopentomutase.